Here is a 317-residue protein sequence, read N- to C-terminus: MKAWQELTITVHREAEEAVSNLLIEAGSQGVAINDTADYIGQENRFGELYPAVEQSEMVTITAYYPNSADIDDIRQTINQGLSRLKQCDVELGELTLTNQELAEEDWADNWKAYYEPARITHDLTIVPSWTDYEATAGEKIIRLDPGMAFGTGTHPTTKLSLFALEQVLRGGETVIDVGTGSGVLSIASSLLGAKEVFAYDLDDVAVRVAKDNIALNQATDNIHVAAGDLLKGLTQEADVIVANILADILVHVTADAYRLVKDEGYLIMSGIISEKLDMVKQAALNAGFLLETHMLQGEWNALIFKKTDDLSGVIGG.

Thr-158, Gly-179, Asp-201, and Asn-244 together coordinate S-adenosyl-L-methionine.

This sequence belongs to the methyltransferase superfamily. PrmA family.

The protein localises to the cytoplasm. It catalyses the reaction L-lysyl-[protein] + 3 S-adenosyl-L-methionine = N(6),N(6),N(6)-trimethyl-L-lysyl-[protein] + 3 S-adenosyl-L-homocysteine + 3 H(+). In terms of biological role, methylates ribosomal protein L11. In Streptococcus equi subsp. zooepidemicus (strain H70), this protein is Ribosomal protein L11 methyltransferase.